The sequence spans 107 residues: Iron-sulfur cluster assembly protein CyaY (107 aa).

It belongs to the frataxin family.

Involved in iron-sulfur (Fe-S) cluster assembly. May act as a regulator of Fe-S biogenesis. The sequence is that of Iron-sulfur cluster assembly protein CyaY from Yersinia pseudotuberculosis serotype O:1b (strain IP 31758).